A 142-amino-acid polypeptide reads, in one-letter code: Maximins y/Hv type 1 (142 aa).

An N-terminal signal peptide occupies residues 1-18; it reads MNFKYIVAVSFLIASGYA. Positions 19-43 are excised as a propeptide; that stretch reads RSEENDVQSLSQREVLEEESLREIR. Phenylalanine 68 is subject to Phenylalanine amide. The propeptide occupies 72 to 121; that stretch reads TAEDHEVMKRLEAVMRDLDSLDHPEEASERETRGFNQEEIANLFTKKEKR. Isoleucine 141 bears the Isoleucine amide mark.

The protein belongs to the bombinin family. In terms of tissue distribution, expressed by the skin glands.

It localises to the secreted. Functionally, maximin-y shows antimicrobial activity against bacteria and against the fungus C.albicans. It has little hemolytic activity. Its function is as follows. Maximin-Hv shows antimicrobial activity against bacteria and against the fungus C.albicans. Shows strong hemolytic activity. The protein is Maximins y/Hv type 1 of Bombina maxima (Giant fire-bellied toad).